Consider the following 561-residue polypeptide: MPENLRSQLVTKGVQRAPNRAMLRAVGFEDSDFTKPIIGVANAHSTITPCNMGINDLAMRAVSGVKEAGGMPQIFGTITISDGISMGTEGMKYSLVSRDVIADSIETVCNGQTMDGVLAIGGCDKNMPGAMIAIARMNIPAIFVYGGTIKPGNYNGKDLTVVSAFEAVGEYSAGKIDETELTEVERRACPGAGSCGGMFTANTMSSAFEAMGMSLMYSSTMAAEDAEKADSTEKSAHVLVEAIRKQILPSQIITRKAIENAISVIMAVGGSTNAVLHLLAIAYAANVKLSLDDFEIIRARVPVLCDLKPSGKYVTTNLHQAGGIPLVMKMLLEHDLLHPDALTITGKTIGEQLTNIPSEPPSNQDVIRPWNNPMYAQGHLAILKGNLATEGAVAKITGVKNPEITGLARVFDSEEACLEAILAGKIQAGNIIVVRYEGPKGGPGMREMLAPTSAIIGAGLGDKVGLITDGRFSGGTYGMVVGHVAPEAAVGGTIALVKEGDMITIDAHKRLLQLNISDEELEKRRQVWKPRKPQYTRGVLAKYAKLVSSSSVGAVTDAGLG.

Residue Cys50 participates in [2Fe-2S] cluster binding. Position 82 (Asp82) interacts with Mg(2+). [2Fe-2S] cluster is bound at residue Cys123. Mg(2+)-binding residues include Asp124 and Lys125. Lys125 bears the N6-carboxylysine mark. Cys195 contacts [2Fe-2S] cluster. Position 447 (Glu447) interacts with Mg(2+). Ser473 acts as the Proton acceptor in catalysis.

It belongs to the IlvD/Edd family. Homodimer. [2Fe-2S] cluster serves as cofactor. Requires Mg(2+) as cofactor.

The catalysed reaction is (2R)-2,3-dihydroxy-3-methylbutanoate = 3-methyl-2-oxobutanoate + H2O. The enzyme catalyses (2R,3R)-2,3-dihydroxy-3-methylpentanoate = (S)-3-methyl-2-oxopentanoate + H2O. Its pathway is amino-acid biosynthesis; L-isoleucine biosynthesis; L-isoleucine from 2-oxobutanoate: step 3/4. It participates in amino-acid biosynthesis; L-valine biosynthesis; L-valine from pyruvate: step 3/4. Functions in the biosynthesis of branched-chain amino acids. Catalyzes the dehydration of (2R,3R)-2,3-dihydroxy-3-methylpentanoate (2,3-dihydroxy-3-methylvalerate) into 2-oxo-3-methylpentanoate (2-oxo-3-methylvalerate) and of (2R)-2,3-dihydroxy-3-methylbutanoate (2,3-dihydroxyisovalerate) into 2-oxo-3-methylbutanoate (2-oxoisovalerate), the penultimate precursor to L-isoleucine and L-valine, respectively. This Trichodesmium erythraeum (strain IMS101) protein is Dihydroxy-acid dehydratase.